Consider the following 453-residue polypeptide: Na(+)/H(+) antiporter NhaA 2 (453 aa).

The next 11 membrane-spanning stretches (helical) occupy residues 32-52 (GALL…PGAA), 71-91 (LSLA…VAGL), 109-129 (AVPI…YVLI), 140-160 (GWAI…AVIG), 169-189 (VFLL…IAVF), 193-213 (NLSV…AILL), 232-252 (ALVH…ALVV), 284-304 (AVPV…GGLV), 310-330 (PVAI…VIAV), 356-376 (MLAG…FAAG), and 382-402 (HVKI…AVIL). Residues 409-453 (GSRGNDATTRDPDQTRVGTATQRTTPDHPTPAATDANQPARSPAP) are disordered.

The protein belongs to the NhaA Na(+)/H(+) (TC 2.A.33) antiporter family.

The protein localises to the cell membrane. It carries out the reaction Na(+)(in) + 2 H(+)(out) = Na(+)(out) + 2 H(+)(in). In terms of biological role, na(+)/H(+) antiporter that extrudes sodium in exchange for external protons. The chain is Na(+)/H(+) antiporter NhaA 2 from Salinispora tropica (strain ATCC BAA-916 / DSM 44818 / JCM 13857 / NBRC 105044 / CNB-440).